Reading from the N-terminus, the 419-residue chain is Protein farnesyltransferase subunit beta (419 aa).

5 PFTB repeats span residues 68–109 (EDNT…ITLG), 119–160 (RNKL…SVLN), 167–208 (IKNV…ILIG), 215–256 (LPRL…ALLQ), and 329–371 (SIAL…SLCQ). Residues 193 to 196 (HGGY) and 235 to 238 (RTNK) each bind (2E,6E)-farnesyl diphosphate. Zn(2+) contacts are provided by D241 and C243. 244–247 (YSFW) is a (2E,6E)-farnesyl diphosphate binding site. H359 serves as a coordination point for Zn(2+).

It belongs to the protein prenyltransferase subunit beta family. Heterodimer of FTA and FTB. Zn(2+) serves as cofactor.

The catalysed reaction is L-cysteinyl-[protein] + (2E,6E)-farnesyl diphosphate = S-(2E,6E)-farnesyl-L-cysteinyl-[protein] + diphosphate. Functionally, catalyzes the transfer of a farnesyl moiety from farnesyl diphosphate to a cysteine at the fourth position from the C-terminus of several proteins. The beta subunit FTB is responsible for peptide-binding. The chain is Protein farnesyltransferase subunit beta (FTB) from Pisum sativum (Garden pea).